Reading from the N-terminus, the 48-residue chain is M-oxotoxin-Ot1b (48 aa).

It is found in the secreted. The protein resides in the target cell membrane. Its function is as follows. Disrupts cell membranes, particularly those rich in phosphocholine, through formation of pores. Has antimicrobial activity, hemolytic activity and insecticidal activity. This Oxyopes takobius (Lynx spider) protein is M-oxotoxin-Ot1b.